The sequence spans 183 residues: Ribonuclease H (183 aa).

The RNase H type-1 domain occupies 2–151; the sequence is SQARFIAFSD…VDQLAQAAAR (150 aa). Positions 11, 57, 79, and 143 each coordinate Mg(2+).

Belongs to the RNase H family. As to quaternary structure, monomer. Mg(2+) serves as cofactor.

The protein localises to the cytoplasm. It catalyses the reaction Endonucleolytic cleavage to 5'-phosphomonoester.. In terms of biological role, endonuclease that specifically degrades the RNA of RNA-DNA hybrids. The protein is Ribonuclease H of Anaeromyxobacter sp. (strain K).